Here is a 120-residue protein sequence, read N- to C-terminus: Holo-[acyl-carrier-protein] synthase (120 aa).

Mg(2+)-binding residues include Asp8 and Glu58.

Belongs to the P-Pant transferase superfamily. AcpS family. Mg(2+) is required as a cofactor.

The protein resides in the cytoplasm. It catalyses the reaction apo-[ACP] + CoA = holo-[ACP] + adenosine 3',5'-bisphosphate + H(+). Transfers the 4'-phosphopantetheine moiety from coenzyme A to a Ser of acyl-carrier-protein. The polypeptide is Holo-[acyl-carrier-protein] synthase (Streptococcus pneumoniae (strain Hungary19A-6)).